The chain runs to 221 residues: Vesicle-associated membrane protein 714 (221 aa).

Residue alanine 2 is modified to N-acetylalanine. Residues 2-190 lie on the Cytoplasmic side of the membrane; it reads AIVYAVVARG…RRALWMKNAK (189 aa). One can recognise a Longin domain in the interval 7-112; sequence VVARGTVVLA…AMNDEFSRVL (106 aa). In terms of domain architecture, v-SNARE coiled-coil homology spans 127-187; sequence TLNRVRGEVS…KRLRRALWMK (61 aa). The chain crosses the membrane as a helical; Anchor for type IV membrane protein span at residues 191 to 211; it reads LLVLLTCLIVFLLYIIIASFC. Residues 212 to 221 are Vesicular-facing; sequence GGITLPSCRS.

Belongs to the synaptobrevin family. In terms of tissue distribution, highly expressed in leaves, stems and roots. Detected in flowers.

It localises to the golgi apparatus membrane. Its function is as follows. Involved in the targeting and/or fusion of transport vesicles to their target membrane. The protein is Vesicle-associated membrane protein 714 of Arabidopsis thaliana (Mouse-ear cress).